We begin with the raw amino-acid sequence, 85 residues long: uncharacterized protein (85 aa).

This is an uncharacterized protein from Mycobacterium tuberculosis (strain CDC 1551 / Oshkosh).